A 137-amino-acid chain; its full sequence is Nucleoside diphosphate kinase (137 aa).

Residues Lys-9, Phe-57, Arg-85, Thr-91, Arg-102, and Asn-112 each contribute to the ATP site. The active-site Pros-phosphohistidine intermediate is the His-115.

The protein belongs to the NDK family. As to quaternary structure, homotetramer. It depends on Mg(2+) as a cofactor.

The protein resides in the cytoplasm. The catalysed reaction is a 2'-deoxyribonucleoside 5'-diphosphate + ATP = a 2'-deoxyribonucleoside 5'-triphosphate + ADP. It catalyses the reaction a ribonucleoside 5'-diphosphate + ATP = a ribonucleoside 5'-triphosphate + ADP. Major role in the synthesis of nucleoside triphosphates other than ATP. The ATP gamma phosphate is transferred to the NDP beta phosphate via a ping-pong mechanism, using a phosphorylated active-site intermediate. The polypeptide is Nucleoside diphosphate kinase (Geobacter sp. (strain M21)).